An 83-amino-acid chain; its full sequence is Small ribosomal subunit protein bS16c (83 aa).

It belongs to the bacterial ribosomal protein bS16 family.

Its subcellular location is the plastid. The protein localises to the chloroplast. The chain is Small ribosomal subunit protein bS16c from Chaetosphaeridium globosum (Charophycean green alga).